Here is a 269-residue protein sequence, read N- to C-terminus: Magnetosome protein MamX (269 aa).

At 1–10 (MNTKAVAHPD) the chain is on the cytoplasmic side. A helical transmembrane segment spans residues 11–31 (IAVWIMALGIAFSMALVLTAL). The Lumenal segment spans residues 32–269 (FNANPWEDHT…NVGGVDAEER (238 aa)). Residues 48–71 (IVAGMAAPHRDGREKMVCSSCHIV) carry the MCR (magnetochrome) 1 motif. Heme-binding residues include Cys-65, Cys-68, His-69, Cys-104, Cys-107, and His-108. An MCR 2 motif is present at residues 87–110 (IVEGTPAPHVDGREKMACASCHTI).

The protein belongs to the magnetosome MamX family. Probably interacts with FtsZ-like and MamY proteins. Requires heme as cofactor.

The protein localises to the magnetosome membrane. Its function is as follows. Required for correct biomineralization of the magnetosome, maybe via redox control. May function with MamY, MamZ amd Mms6 in biomineralization. The protein is Magnetosome protein MamX of Magnetospirillum gryphiswaldense (strain DSM 6361 / JCM 21280 / NBRC 15271 / MSR-1).